The chain runs to 933 residues: Progesterone receptor (933 aa).

Positions 1 to 164 are AF3; mediates transcriptional activation; the sequence is MTELKAKGPR…PATQGVLSPL (164 aa). A disordered region spans residues 1-256; the sequence is MTELKAKGPR…AAAGGGAAAV (256 aa). Residues 1–566 are modulating, Pro-Rich; that stretch reads MTELKAKGPR…YSFESLPQKI (566 aa). Ser20 is modified (phosphoserine). Residues 55–59 carry the LXXL motif 1 motif; that stretch reads LDGLL. Ser81 is subject to Phosphoserine. The LXXL motif 2 signature appears at 115-119; the sequence is LDTLL. Residues Ser130 and Ser162 each carry the phosphoserine modification. The interval 165-305 is mediates transcriptional transrepression; the sequence is MSRSGCKAGD…LATTMMDFIH (141 aa). The short motif at 183 to 187 is the Nuclear localization signal element; it reads KVLPR. 2 positions are modified to phosphoserine: Ser190 and Ser213. Residues 220–231 show a composition bias toward acidic residues; it reads EVEEEDGSESEE. Over residues 232–246 the composition is skewed to low complexity; the sequence is SAGPLLKGKPRALGG. Residue Ser294 is modified to Phosphoserine; by MAPK1. Positions 331-378 are disordered; sequence GGAGAASAFAPPRSSPSASSTPVAVGDFPDCAYPPDAEPKDDAYPLYS. The segment covering 335-350 has biased composition (low complexity); sequence AASAFAPPRSSPSASS. A Phosphoserine; by MAPK modification is found at Ser345. Lys388 is covalently cross-linked (Glycyl lysine isopeptide (Lys-Gly) (interchain with G-Cter in SUMO); alternate). Lys388 is covalently cross-linked (Glycyl lysine isopeptide (Lys-Gly) (interchain with G-Cter in ubiquitin); alternate). The residue at position 400 (Ser400) is a Phosphoserine; by CDK2. The segment at 415 to 452 is disordered; that stretch reads PDFPLGPPPPLPPRAPPSRPGEAAVTAAPASASVSSAS. The span at 418 to 433 shows a compositional bias: pro residues; it reads PLGPPPPLPPRAPPSR. The segment covering 434–452 has biased composition (low complexity); that stretch reads PGEAAVTAAPASASVSSAS. Residues 456-546 are AF1; mediates transcriptional activation; sequence STLECILYKA…VYPPYLNYLR (91 aa). Lys531 is covalently cross-linked (Glycyl lysine isopeptide (Lys-Gly) (interchain with G-Cter in SUMO)). 2 consecutive NR C4-type zinc fingers follow at residues 567–587 and 603–627; these read CLIC…CGSC and CAGR…LRKC. The nuclear receptor DNA-binding region spans 567-639; sequence CLICGDEASG…AGMVLGGRKF (73 aa). Phosphoserine is present on Ser676. The 235-residue stretch at 679 to 913 folds into the NR LBD domain; it reads QDIQLIPPLI…EFPEMMSEVI (235 aa). The AF2; mediates transcriptional activation stretch occupies residues 687-933; it reads LINLLMSIEP…MVKPLLFHKK (247 aa). Residue Arg766 participates in progesterone binding.

Belongs to the nuclear hormone receptor family. In terms of assembly, interacts with SMARD1 and UNC45A. Interacts with CUEDC2; the interaction promotes ubiquitination, decreases sumoylation, and represses transcriptional activity. Interacts with PIAS3; the interaction promotes sumoylation of PR in a hormone-dependent manner, inhibits DNA-binding, and alters nuclear export. Interacts with SP1; the interaction requires ligand-induced phosphorylation on Ser-345 by ERK1/2-MAPK. Interacts with PRMT2. Interacts with NCOA2 and NCOA1. Interacts with KLF9. Interacts with GTF2B. Phosphorylated on multiple serine sites. Several of these sites are hormone-dependent. Phosphorylation on Ser-294 is highly hormone-dependent and modulates ubiquitination and sumoylation on Lys-388. Phosphorylation on Ser-102 and Ser-345 also requires induction by hormone. Basal phosphorylation on Ser-81, Ser-162, Ser-190 and Ser-400 is increased in response to progesterone and can be phosphorylated in vitro by the CDK2-A1 complex. Increased levels of phosphorylation on Ser-400 also in the presence of EGF, heregulin, IGF, PMA and FBS. Phosphorylation at this site by CDK2 is ligand-independent, and increases nuclear translocation and transcriptional activity. Phosphorylation at Ser-162 and Ser-294, but not at Ser-190, is impaired during the G(2)/M phase of the cell cycle. Phosphorylation on Ser-345 by ERK1/2 MAPK is required for interaction with SP1. Post-translationally, sumoylation is hormone-dependent and represses transcriptional activity. Sumoylation on all three sites is enhanced by PIAS3. Desumoylated by SENP1. Sumoylation on Lys-388, the main site of sumoylation, is repressed by ubiquitination on the same site, and modulated by phosphorylation at Ser-294. In terms of processing, ubiquitination is hormone-dependent and represses sumoylation on the same site. Promoted by MAPK-mediated phosphorylation on Ser-294. Ubiquitinated by UBR5, leading to its degradation: UBR5 specifically recognizes and binds ligand-bound PGR when it is not associated with coactivators (NCOAs). In presence of NCOAs, the UBR5-degron is not accessible, preventing its ubiquitination and degradation. Palmitoylated by ZDHHC7 and ZDHHC21. Palmitoylation is required for plasma membrane targeting and for rapid intracellular signaling via ERK and AKT kinases and cAMP generation.

It is found in the nucleus. The protein localises to the cytoplasm. The steroid hormones and their receptors are involved in the regulation of eukaryotic gene expression and affect cellular proliferation and differentiation in target tissues. Transcriptional activator of several progesteron-dependent promoters in a variety of cell types. Involved in activation of SRC-dependent MAPK signaling on hormone stimulation. The polypeptide is Progesterone receptor (PGR) (Pan paniscus (Pygmy chimpanzee)).